The sequence spans 210 residues: Large ribosomal subunit protein bL25 (210 aa).

The segment at 179–210 (LPPQQEEEIHSGEQQEPGQPEAEEGRETTPEG) is disordered. Basic and acidic residues predominate over residues 201–210 (EEGRETTPEG).

This sequence belongs to the bacterial ribosomal protein bL25 family. CTC subfamily. As to quaternary structure, part of the 50S ribosomal subunit; part of the 5S rRNA/L5/L18/L25 subcomplex. Contacts the 5S rRNA. Binds to the 5S rRNA independently of L5 and L18.

In terms of biological role, this is one of the proteins that binds to the 5S RNA in the ribosome where it forms part of the central protuberance. The chain is Large ribosomal subunit protein bL25 from Geobacillus thermodenitrificans (strain NG80-2).